Consider the following 178-residue polypeptide: Arginine repressor (178 aa).

The tract at residues 1-20 (MTEAQEPEYGGPSVPQTRTA) is disordered.

It belongs to the ArgR family.

It localises to the cytoplasm. It functions in the pathway amino-acid biosynthesis; L-arginine biosynthesis [regulation]. Regulates arginine biosynthesis genes. The chain is Arginine repressor from Streptomyces griseus subsp. griseus (strain JCM 4626 / CBS 651.72 / NBRC 13350 / KCC S-0626 / ISP 5235).